The sequence spans 956 residues: Matrilin-2 (956 aa).

Positions 1-23 (MEKMLVGCLLMLGQLFLVLPVDG) are cleaved as a signal peptide. In terms of domain architecture, VWFA 1 spans 57–232 (DLVFIIDSSR…SQIESLTSVF (176 aa)). Asn-221 carries an N-linked (GlcNAc...) asparagine glycan. 10 consecutive EGF-like domains span residues 238–278 (TVHM…KTCR), 279–319 (IQDL…KRCT), 320–360 (AVDY…KTCS), 361–401 (KIDY…KTCR), 402–442 (RINY…KTCS), 443–483 (RVDH…KTCS), 484–524 (RADY…KTCA), 525–565 (KLDS…KTCR), 566–606 (RKDV…KRCR), and 607–647 (RKNV…KHCK). 30 disulfides stabilise this stretch: Cys-242/Cys-253, Cys-249/Cys-262, Cys-264/Cys-277, Cys-283/Cys-294, Cys-290/Cys-303, Cys-305/Cys-318, Cys-324/Cys-335, Cys-331/Cys-344, Cys-346/Cys-359, Cys-365/Cys-376, Cys-372/Cys-385, Cys-387/Cys-400, Cys-406/Cys-417, Cys-413/Cys-426, Cys-428/Cys-441, Cys-447/Cys-458, Cys-454/Cys-467, Cys-469/Cys-482, Cys-488/Cys-499, Cys-495/Cys-508, Cys-510/Cys-523, Cys-529/Cys-540, Cys-536/Cys-549, Cys-551/Cys-564, Cys-570/Cys-581, Cys-577/Cys-590, Cys-592/Cys-605, Cys-611/Cys-622, Cys-618/Cys-631, and Cys-633/Cys-646. A VWFA 2 domain is found at 655–830 (DLVFVIDGSK…STMGEISEKL (176 aa)). Residue Asn-890 is glycosylated (N-linked (GlcNAc...) asparagine). Residues 917–955 (KCENLILFQNVANEEVRKLTQRLEEMTQRMEALENRLKY) adopt a coiled-coil conformation.

Detected in a variety of organs, including calvaria, uterus, heart and brain, as well as fibroblast and osteoblast cell lines.

It localises to the secreted. Functionally, involved in matrix assembly. The polypeptide is Matrilin-2 (Matn2) (Mus musculus (Mouse)).